Reading from the N-terminus, the 193-residue chain is MALTQLGNHPKEELALVEIATAILSEHKTVMPFSSLVEEIQDFLAVDAETFQSRLSQFYTDLNTDGSFISLGNNEWGLRAWYPVDAIDESIHEIDDDDDAPKRKKAAKKVNVFADSAADDDVIDYNDDDPEDEDFGEVTEEETDVDVDDSEVEVEDDEEEEIAVGDDETIDDNLTELTGTNDLDDLSDGDIEK.

The 68-residue stretch at 14 to 81 (LALVEIATAI…GNNEWGLRAW (68 aa)) folds into the HTH HARE-type domain. 2 stretches are compositionally biased toward acidic residues: residues 119–174 (DDDV…DDNL) and 182–193 (DLDDLSDGDIEK). The segment at 119–193 (DDDVIDYNDD…DDLSDGDIEK (75 aa)) is disordered.

Belongs to the RpoE family. In terms of assembly, RNAP is composed of a core of 2 alpha, a beta and a beta' subunits. The core is associated with a delta subunit and one of several sigma factors.

In terms of biological role, participates in both the initiation and recycling phases of transcription. In the presence of the delta subunit, RNAP displays an increased specificity of transcription, a decreased affinity for nucleic acids, and an increased efficiency of RNA synthesis because of enhanced recycling. The protein is Probable DNA-directed RNA polymerase subunit delta of Leuconostoc citreum (strain KM20).